The sequence spans 304 residues: MRCNACWRDLEGRAISTTCGHLLCTEDASKILSNDGACPICDQVLSKSLMKPVDINPNEEWINMAMAGISPQILMKSAYRSVMFYIAQRDLEMQYKMNRVVAQCRQKCEGMQAKFSEKMEQVHTAYQKMGKRCQMMEQEVENLTKDKQELQEKFSEKSRQKRKLDEMYDQLRSEYESVKRTAIQPANNFYPRHQEPDFFSNPAVNMMENRETIRKDRSFFSPATPGPKDEIWPARQNSSNSGPFDISTDSPAIPSDLGNRRAGRGHPVYGGGGTANPQSTLRNLILSPIKRSQLSRSRPQLFTL.

An RING-type; degenerate zinc finger spans residues 3–42 (CNACWRDLEGRAISTTCGHLLCTEDASKILSNDGACPICD). The stretch at 124–184 (TAYQKMGKRC…YESVKRTAIQ (61 aa)) forms a coiled coil. The tract at residues 218-279 (SFFSPATPGP…GGGGTANPQS (62 aa)) is disordered. Polar residues predominate over residues 235 to 250 (RQNSSNSGPFDISTDS).

In terms of tissue distribution, expressed mostly in flower buds and roots.

It is found in the nucleus. Its subcellular location is the chromosome. The catalysed reaction is S-ubiquitinyl-[E2 ubiquitin-conjugating enzyme]-L-cysteine + [acceptor protein]-L-lysine = [E2 ubiquitin-conjugating enzyme]-L-cysteine + N(6)-ubiquitinyl-[acceptor protein]-L-lysine.. It functions in the pathway protein modification; protein ubiquitination. Functionally, ubiquitin E3 ligase required for class I crossover (CO) formation during meiosis. In Arabidopsis thaliana (Mouse-ear cress), this protein is E3 ubiquitin-protein ligase CCNB1IP1 homolog (HEI10).